A 476-amino-acid polypeptide reads, in one-letter code: ENTH domain-containing protein C794.11c (476 aa).

The ENTH domain maps to 30–154 (YTSMEARVRE…VELLNDSERI (125 aa)). 4 disordered regions span residues 157-198 (ERKR…GSYR), 213-308 (NGYH…GFGD), 410-429 (QAGLGLTSQQPTAAKSSGSN), and 444-472 (VHQENSTRERVVSSSSEPVSKTQNFLDND). Residue serine 173 is modified to Phosphoserine. 2 stretches are compositionally biased toward low complexity: residues 178–198 (RISTSSKSRFPSFGSSRGSYR) and 213–222 (NGYHDSSSMS). Residue serine 228 is modified to Phosphoserine. A compositionally biased stretch (acidic residues) spans 229-240 (DNDVEEYNEDGD). Tyrosine 235 bears the Phosphotyrosine mark. Residues serine 243 and serine 244 each carry the phosphoserine modification. Positions 262 to 271 (QSDKAPEQPK) are enriched in basic and acidic residues. Over residues 444 to 454 (VHQENSTRERV) the composition is skewed to basic and acidic residues. A Phosphoserine modification is found at serine 459.

This is ENTH domain-containing protein C794.11c from Schizosaccharomyces pombe (strain 972 / ATCC 24843) (Fission yeast).